Consider the following 375-residue polypeptide: 3-dehydroquinate synthase (375 aa).

NAD(+) contacts are provided by residues 82-87 (SGETSK), 116-120 (GVVGD), 140-141 (TT), Lys-153, and Lys-162. Zn(2+) contacts are provided by Glu-195, His-259, and His-276.

It belongs to the sugar phosphate cyclases superfamily. Dehydroquinate synthase family. NAD(+) is required as a cofactor. Requires Co(2+) as cofactor. It depends on Zn(2+) as a cofactor.

The protein resides in the cytoplasm. It carries out the reaction 7-phospho-2-dehydro-3-deoxy-D-arabino-heptonate = 3-dehydroquinate + phosphate. It participates in metabolic intermediate biosynthesis; chorismate biosynthesis; chorismate from D-erythrose 4-phosphate and phosphoenolpyruvate: step 2/7. Its function is as follows. Catalyzes the conversion of 3-deoxy-D-arabino-heptulosonate 7-phosphate (DAHP) to dehydroquinate (DHQ). The protein is 3-dehydroquinate synthase of Rhodopirellula baltica (strain DSM 10527 / NCIMB 13988 / SH1).